The chain runs to 233 residues: 27 kDa hemolymph glycoprotein (233 aa).

The first 17 residues, 1–17 (MIWKTLIVAFMATAVLA), serve as a signal peptide directing secretion. N-linked (GlcNAc...) asparagine glycans are attached at residues asparagine 125 and asparagine 156.

This sequence belongs to the UPF0408 family. In terms of processing, N-glycosylated. As to expression, hemolymph.

It is found in the secreted. The protein is 27 kDa hemolymph glycoprotein of Manduca sexta (Tobacco hawkmoth).